Here is a 628-residue protein sequence, read N- to C-terminus: MAIKPQPQWQRRLASVLLWGSTIYLLVNLLAPALFRSQPPQVPYSLFIDQVEGDKVASVYVGQNEIRYQLKPEAEDEGKEKAAEGQILRTTPIFDLELPKRLEAKGIEFAAAPPAKNSWFGTLLSWVIPPLIFVGIWSFFLNRNNNGAPGGALAFTKSKAKVYVEGDSTKVTFDDVAGVEEAKTELSEVVDFLKFPQRYTALGAKIPKGVLLVGPPGTGKTLLAKAAAGEAGVPFFIISGSEFVELFVGAGAARVRDLFEQAKKQAPCIVFIDELDAIGKSRASGAFMGGNDEREQTLNQLLTEMDGFSAAGATVIVLAATNRPETLDPALLRPGRFDRQVLVDRPDLAGRLKILEIYAKKIKLDKEVELKNIATRTPGFAGADLANLVNEAALLAARNKQDSVTEADFREAIERVVAGLEKKSRVLSDKEKKIVAYHEVGHALVGAVMPGGGQVAKISIVPRGMAALGYTLQMPTEDRFLLNESELRDQIATLLGGRAAEEIVFDSITTGAANDLQRATDLAEQMVTTYGMSKVLGPLAYDKGQQNNFLGQGMGNPRRMVSDDTAKEIDLEVKEIVEQGHNQALAILEHNRDLLEAIAEKILEKEVIEGEELHHLLGQVQAPGTLVV.

The Cytoplasmic segment spans residues 1–14 (MAIKPQPQWQRRLA). The helical transmembrane segment at 15–35 (SVLLWGSTIYLLVNLLAPALF) threads the bilayer. Over 36 to 119 (RSQPPQVPYS…AAAPPAKNSW (84 aa)) the chain is Lumenal. A helical membrane pass occupies residues 120-140 (FGTLLSWVIPPLIFVGIWSFF). Topologically, residues 141–628 (LNRNNNGAPG…QVQAPGTLVV (488 aa)) are cytoplasmic. Position 214 to 221 (214 to 221 (GPPGTGKT)) interacts with ATP. Histidine 438 contacts Zn(2+). The active site involves glutamate 439. Zn(2+)-binding residues include histidine 442 and aspartate 515.

In the central section; belongs to the AAA ATPase family. It in the C-terminal section; belongs to the peptidase M41 family. In terms of assembly, homohexamer. It depends on Zn(2+) as a cofactor.

The protein resides in the cellular thylakoid membrane. Functionally, acts as a processive, ATP-dependent zinc metallopeptidase for both cytoplasmic and membrane proteins. Plays a role in the quality control of integral membrane proteins. This is ATP-dependent zinc metalloprotease FtsH 4 from Synechocystis sp. (strain ATCC 27184 / PCC 6803 / Kazusa).